A 485-amino-acid chain; its full sequence is NGFI-A-binding protein 1 (485 aa).

The NCD1 stretch occupies residues 4 to 82 (ALPRTLGELQ…RDWVTNPGLF (79 aa)). Residues Lys126, Lys129, and Lys143 each participate in a glycyl lysine isopeptide (Lys-Gly) (interchain with G-Cter in SUMO2) cross-link. The disordered stretch occupies residues 160–187 (WQGHHATESEHSLSPADVGSPASPKESS). A phosphoserine mark is found at Ser171 and Ser182. Lys211 participates in a covalent cross-link: Glycyl lysine isopeptide (Lys-Gly) (interchain with G-Cter in SUMO2). Positions 220–309 (LLKNNKKLAK…ARQVSREVTY (90 aa)) are NCD2. Residues 306–337 (EVTYKYTYRTTRLKCGERDELSPKRIKVEDGF) are necessary for nuclear localization. Ser327 is subject to Phosphoserine. Lys332 participates in a covalent cross-link: Glycyl lysine isopeptide (Lys-Gly) (interchain with G-Cter in SUMO1); alternate. Lys332 is covalently cross-linked (Glycyl lysine isopeptide (Lys-Gly) (interchain with G-Cter in SUMO2); alternate). Residues Lys354, Lys368, and Lys372 each participate in a glycyl lysine isopeptide (Lys-Gly) (interchain with G-Cter in SUMO2) cross-link. The tract at residues 398–432 (RQSSGEHSPDGLPSDGSDGQGERPLNLRMPNVQNR) is disordered. At Ser405 the chain carries Phosphoserine. Glycyl lysine isopeptide (Lys-Gly) (interchain with G-Cter in SUMO2) cross-links involve residues Lys452, Lys463, and Lys475. A Glycyl lysine isopeptide (Lys-Gly) (interchain with G-Cter in SUMO1); alternate cross-link involves residue Lys478. A Glycyl lysine isopeptide (Lys-Gly) (interchain with G-Cter in SUMO2); alternate cross-link involves residue Lys478.

Belongs to the NAB family. In terms of assembly, homomultimers may associate with EGR1 bound to DNA.

Its subcellular location is the nucleus. In terms of biological role, acts as a transcriptional repressor for zinc finger transcription factors EGR1 and EGR2. This Mesocricetus auratus (Golden hamster) protein is NGFI-A-binding protein 1 (NAB1).